An 80-amino-acid chain; its full sequence is UPF0291 protein LCA_1274 (80 aa).

The segment at 59-80 (EGKEVTPEKVKDIQREKGLRDD) is disordered.

This sequence belongs to the UPF0291 family.

The protein resides in the cytoplasm. The sequence is that of UPF0291 protein LCA_1274 from Latilactobacillus sakei subsp. sakei (strain 23K) (Lactobacillus sakei subsp. sakei).